Consider the following 674-residue polypeptide: DNA ligase (674 aa).

NAD(+) is bound by residues 42–46 (DNVYD), 91–92 (SM), and E121. Catalysis depends on K123, which acts as the N6-AMP-lysine intermediate. Residues R144, E178, K294, and K318 each coordinate NAD(+). 4 residues coordinate Zn(2+): C412, C415, C430, and C435. One can recognise a BRCT domain in the interval 596–674 (VKDSFVAGKT…ETELLANLKD (79 aa)).

It belongs to the NAD-dependent DNA ligase family. LigA subfamily. Requires Mg(2+) as cofactor. Mn(2+) is required as a cofactor.

The catalysed reaction is NAD(+) + (deoxyribonucleotide)n-3'-hydroxyl + 5'-phospho-(deoxyribonucleotide)m = (deoxyribonucleotide)n+m + AMP + beta-nicotinamide D-nucleotide.. In terms of biological role, DNA ligase that catalyzes the formation of phosphodiester linkages between 5'-phosphoryl and 3'-hydroxyl groups in double-stranded DNA using NAD as a coenzyme and as the energy source for the reaction. It is essential for DNA replication and repair of damaged DNA. The sequence is that of DNA ligase from Lacticaseibacillus casei (strain BL23) (Lactobacillus casei).